Reading from the N-terminus, the 259-residue chain is MSNQNDDTRVDLLGSDDFEKYLLYGSREIRQILQGLIDHHALITAQTVPGHQSFLTTVVALPDDGASIIIDAGPDEHINQRVGNAERLVCMSQLDKIRIQFDLSAPALTRYENRPAFRAPVPAQLLRLQRREFYRLQTPVTHTVTCRIPLPQPDGRTLELETRVIDISGGGIAVVVPPDNVPFGADMEFENCKLTLPELGTIPVRLKVRNLFRLTNRNGVEMLRAGCEFVDLPRSADNAIQRYIFKVERDRSARERGRL.

The region spanning Gln129–Lys246 is the PilZ domain.

This sequence belongs to the YcgR family. Monomer. Interacts with the flagellar basal bodies.

The protein resides in the bacterial flagellum basal body. Its function is as follows. Acts as a flagellar brake, regulating swimming and swarming in a bis-(3'-5') cyclic diguanylic acid (c-di-GMP)-dependent manner. Binds 1 c-di-GMP dimer per subunit. Increasing levels of c-di-GMP lead to decreased motility. The chain is Flagellar brake protein YcgR from Azoarcus sp. (strain BH72).